The chain runs to 149 residues: Transcriptional repressor NrdR (149 aa).

Residues 3–34 (CPFCSATDTKVIDSRLVADGHQVRRRRECTLC) fold into a zinc finger. The region spanning 49–139 (PRVIKRDDTR…VYRAFEDVSQ (91 aa)) is the ATP-cone domain.

It belongs to the NrdR family. Zn(2+) serves as cofactor.

Negatively regulates transcription of bacterial ribonucleotide reductase nrd genes and operons by binding to NrdR-boxes. This Shewanella denitrificans (strain OS217 / ATCC BAA-1090 / DSM 15013) protein is Transcriptional repressor NrdR.